The sequence spans 207 residues: Probable RNA 2'-phosphotransferase (207 aa).

It belongs to the KptA/TPT1 family.

In terms of biological role, removes the 2'-phosphate from RNA via an intermediate in which the phosphate is ADP-ribosylated by NAD followed by a presumed transesterification to release the RNA and generate ADP-ribose 1''-2''-cyclic phosphate (APPR&gt;P). May function as an ADP-ribosylase. In Methanosarcina barkeri (strain Fusaro / DSM 804), this protein is Probable RNA 2'-phosphotransferase.